We begin with the raw amino-acid sequence, 187 residues long: UPF0232 protein MMAR_0004 (187 aa).

Disordered regions lie at residues 1–77 (MSDD…QPLG) and 166–187 (ASPS…DTYG). Over residues 14–30 (AARDELSGMDLVRRTLA) the composition is skewed to basic and acidic residues. Residues 31–55 (EARAAARARGQDPGRGFAAGPAPRR) are compositionally biased toward low complexity.

The protein belongs to the UPF0232 family.

The chain is UPF0232 protein MMAR_0004 from Mycobacterium marinum (strain ATCC BAA-535 / M).